The chain runs to 212 residues: MSSPATAAAAAASCGVLRHHHPPASPRPPPTTTTTTSRLLLASRSRGLQRPLRVNHAPPRRLPPTAARAQSAAAAGYQPESEFYKVEAILRPWRVPYVSSGLLQMGIRGVTVSDVRGFGAQGGSTERHEGSEFAEDTFIDKVKMEIVVSKDQVEAVVDKIIEKARTGEIGDGKIFLIPVSDVIRIRTGERGERAERMAGGLADKLSSAMPIS.

3 stretches are compositionally biased toward low complexity: residues 1-12, 32-46, and 63-74; these read MSSPATAAAAAA, TTTTTSRLLLASRSR, and PPTAARAQSAAA. The transit peptide at 1–68 directs the protein to the chloroplast; it reads MSSPATAAAA…PRRLPPTAAR (68 aa). The disordered stretch occupies residues 1–74; the sequence is MSSPATAAAA…TAARAQSAAA (74 aa). Residues 117–121 and 170–173 contribute to the ATP site; these read GFGAQ and GDGK. G119 lines the Mg(2+) pocket.

It belongs to the P(II) protein family. Homodimer.

It localises to the plastid. The protein localises to the chloroplast. In terms of biological role, participates in sensing carbon and organic nitrogen status and regulates some steps of primary carbon and nitrogen metabolism. The polypeptide is Nitrogen regulatory protein P-II homolog (GLB) (Oryza sativa subsp. japonica (Rice)).